Consider the following 568-residue polypeptide: Adenine deaminase (568 aa).

This sequence belongs to the metallo-dependent hydrolases superfamily. Adenine deaminase family. The cofactor is Mn(2+).

It carries out the reaction adenine + H2O + H(+) = hypoxanthine + NH4(+). In Clostridium perfringens (strain ATCC 13124 / DSM 756 / JCM 1290 / NCIMB 6125 / NCTC 8237 / Type A), this protein is Adenine deaminase.